Here is a 329-residue protein sequence, read N- to C-terminus: MSLTKCASKLEIDRLISLNFRINQIIVLIPVFITFIFTYYAIKVVQKKSIFELSTKFLLIQNFFSANLHQVLYAIETIRRLHISLFETNQPCIPLKTEFECRLYLEVFVSGVAGMVYGQTGLLLERACATFIKNYEEKKSVRTGLAISVSVLCLSFITSRLIIWDDPLDGYQLTCISFPSDSVDRSSYFQSICTLLALFNLVTSILIWKYNKKFEYSTPFVVGPRFRKREVIDSTSTICFLTFVQFIFFLVYSLGFFIIKSIREIISYENYYLVAVWLYTPPYIAASFPILIFYRIRSSYANRVLIIKKFTNTKQTIEEHIQQMKNAWK.

6 helical membrane-spanning segments follow: residues 25–45, 103–123, 144–164, 188–208, 238–258, and 273–293; these read IIVLIPVFITFIFTYYAIKVV, LYLEVFVSGVAGMVYGQTGLL, GLAISVSVLCLSFITSRLIIW, YFQSICTLLALFNLVTSILIW, ICFLTFVQFIFFLVYSLGFFI, and LVAVWLYTPPYIAASFPILIF.

This sequence belongs to the nematode receptor-like protein sra family.

Its subcellular location is the membrane. The polypeptide is Serpentine receptor class alpha-4 (sra-4) (Caenorhabditis elegans).